We begin with the raw amino-acid sequence, 217 residues long: Protein GrpE (217 aa).

The protein belongs to the GrpE family. As to quaternary structure, homodimer.

It is found in the cytoplasm. Its function is as follows. Participates actively in the response to hyperosmotic and heat shock by preventing the aggregation of stress-denatured proteins, in association with DnaK and GrpE. It is the nucleotide exchange factor for DnaK and may function as a thermosensor. Unfolded proteins bind initially to DnaJ; upon interaction with the DnaJ-bound protein, DnaK hydrolyzes its bound ATP, resulting in the formation of a stable complex. GrpE releases ADP from DnaK; ATP binding to DnaK triggers the release of the substrate protein, thus completing the reaction cycle. Several rounds of ATP-dependent interactions between DnaJ, DnaK and GrpE are required for fully efficient folding. The sequence is that of Protein GrpE from Mycoplasma pneumoniae (strain ATCC 29342 / M129 / Subtype 1) (Mycoplasmoides pneumoniae).